Reading from the N-terminus, the 443-residue chain is Chromosome partition protein MukF (443 aa).

A leucine-zipper region spans residues 209-237 (LDETSGNLRELQDTLNAAGDKLQAQLLRI).

This sequence belongs to the MukF family. Interacts, and probably forms a ternary complex, with MukE and MukB via its C-terminal region. The complex formation is stimulated by calcium or magnesium. It is required for an interaction between MukE and MukB.

It is found in the cytoplasm. The protein resides in the nucleoid. In terms of biological role, involved in chromosome condensation, segregation and cell cycle progression. May participate in facilitating chromosome segregation by condensation DNA from both sides of a centrally located replisome during cell division. Not required for mini-F plasmid partitioning. Probably acts via its interaction with MukB and MukE. Overexpression results in anucleate cells. It has a calcium binding activity. The polypeptide is Chromosome partition protein MukF (Actinobacillus pleuropneumoniae serotype 3 (strain JL03)).